A 317-amino-acid chain; its full sequence is Type II methyltransferase M.NgoBI (317 aa).

Residues 2–302 enclose the SAM-dependent MTase C5-type domain; it reads YKTIDLFSGI…KICSLLFPAR (301 aa). C71 is an active-site residue.

This sequence belongs to the class I-like SAM-binding methyltransferase superfamily. C5-methyltransferase family.

It catalyses the reaction a 2'-deoxycytidine in DNA + S-adenosyl-L-methionine = a 5-methyl-2'-deoxycytidine in DNA + S-adenosyl-L-homocysteine + H(+). In terms of biological role, a methylase, recognizes the double-stranded sequence 5'-RGCGCY-3', methylates C-5 on both strands, and protects the DNA from cleavage by the NgoBI endonuclease. The polypeptide is Type II methyltransferase M.NgoBI (ngoBIM) (Neisseria gonorrhoeae).